We begin with the raw amino-acid sequence, 214 residues long: Holliday junction branch migration complex subunit RuvA (214 aa).

The tract at residues M1–A63 is domain I. Residues D64 to E142 form a domain II region. The interval A143–V151 is flexible linker. The domain III stretch occupies residues V151–R214.

The protein belongs to the RuvA family. As to quaternary structure, homotetramer. Forms an RuvA(8)-RuvB(12)-Holliday junction (HJ) complex. HJ DNA is sandwiched between 2 RuvA tetramers; dsDNA enters through RuvA and exits via RuvB. An RuvB hexamer assembles on each DNA strand where it exits the tetramer. Each RuvB hexamer is contacted by two RuvA subunits (via domain III) on 2 adjacent RuvB subunits; this complex drives branch migration. In the full resolvosome a probable DNA-RuvA(4)-RuvB(12)-RuvC(2) complex forms which resolves the HJ.

It localises to the cytoplasm. Its function is as follows. The RuvA-RuvB-RuvC complex processes Holliday junction (HJ) DNA during genetic recombination and DNA repair, while the RuvA-RuvB complex plays an important role in the rescue of blocked DNA replication forks via replication fork reversal (RFR). RuvA specifically binds to HJ cruciform DNA, conferring on it an open structure. The RuvB hexamer acts as an ATP-dependent pump, pulling dsDNA into and through the RuvAB complex. HJ branch migration allows RuvC to scan DNA until it finds its consensus sequence, where it cleaves and resolves the cruciform DNA. This chain is Holliday junction branch migration complex subunit RuvA, found in Micrococcus luteus (strain ATCC 4698 / DSM 20030 / JCM 1464 / CCM 169 / CCUG 5858 / IAM 1056 / NBRC 3333 / NCIMB 9278 / NCTC 2665 / VKM Ac-2230) (Micrococcus lysodeikticus).